The following is a 384-amino-acid chain: N-acetyldiaminopimelate deacetylase (384 aa).

The active site involves Asp-74. Glu-133 (proton acceptor) is an active-site residue.

This sequence belongs to the peptidase M20A family. N-acetyldiaminopimelate deacetylase subfamily.

The enzyme catalyses N-acetyl-(2S,6S)-2,6-diaminopimelate + H2O = (2S,6S)-2,6-diaminopimelate + acetate. Its pathway is amino-acid biosynthesis; L-lysine biosynthesis via DAP pathway; LL-2,6-diaminopimelate from (S)-tetrahydrodipicolinate (acetylase route): step 3/3. Its function is as follows. Catalyzes the conversion of N-acetyl-diaminopimelate to diaminopimelate and acetate. The protein is N-acetyldiaminopimelate deacetylase of Pediococcus pentosaceus (strain ATCC 25745 / CCUG 21536 / LMG 10740 / 183-1w).